A 190-amino-acid chain; its full sequence is Crossover junction endodeoxyribonuclease RuvC (190 aa).

Active-site residues include Asp8, Glu67, and Asp139. 3 residues coordinate Mg(2+): Asp8, Glu67, and Asp139.

This sequence belongs to the RuvC family. In terms of assembly, homodimer which binds Holliday junction (HJ) DNA. The HJ becomes 2-fold symmetrical on binding to RuvC with unstacked arms; it has a different conformation from HJ DNA in complex with RuvA. In the full resolvosome a probable DNA-RuvA(4)-RuvB(12)-RuvC(2) complex forms which resolves the HJ. Requires Mg(2+) as cofactor.

Its subcellular location is the cytoplasm. It carries out the reaction Endonucleolytic cleavage at a junction such as a reciprocal single-stranded crossover between two homologous DNA duplexes (Holliday junction).. In terms of biological role, the RuvA-RuvB-RuvC complex processes Holliday junction (HJ) DNA during genetic recombination and DNA repair. Endonuclease that resolves HJ intermediates. Cleaves cruciform DNA by making single-stranded nicks across the HJ at symmetrical positions within the homologous arms, yielding a 5'-phosphate and a 3'-hydroxyl group; requires a central core of homology in the junction. The consensus cleavage sequence is 5'-(A/T)TT(C/G)-3'. Cleavage occurs on the 3'-side of the TT dinucleotide at the point of strand exchange. HJ branch migration catalyzed by RuvA-RuvB allows RuvC to scan DNA until it finds its consensus sequence, where it cleaves and resolves the cruciform DNA. The chain is Crossover junction endodeoxyribonuclease RuvC from Pasteurella multocida (strain Pm70).